The primary structure comprises 236 residues: Ribose-5-phosphate isomerase A (236 aa).

Substrate is bound by residues Thr28–Thr31, Asp83–Asp86, and Lys96–Gly99. Glu105 functions as the Proton acceptor in the catalytic mechanism. A substrate-binding site is contributed by Lys123.

It belongs to the ribose 5-phosphate isomerase family. In terms of assembly, homodimer.

The enzyme catalyses aldehydo-D-ribose 5-phosphate = D-ribulose 5-phosphate. The protein operates within carbohydrate degradation; pentose phosphate pathway; D-ribose 5-phosphate from D-ribulose 5-phosphate (non-oxidative stage): step 1/1. Catalyzes the reversible conversion of ribose-5-phosphate to ribulose 5-phosphate. This is Ribose-5-phosphate isomerase A from Afipia carboxidovorans (strain ATCC 49405 / DSM 1227 / KCTC 32145 / OM5) (Oligotropha carboxidovorans).